The chain runs to 141 residues: Hemoglobin subunit beta-C(NA) (141 aa).

The 141-residue stretch at proline 1 to histidine 141 folds into the Globin domain. Residues histidine 58 and histidine 87 each contribute to the heme b site.

It belongs to the globin family. Heterotetramer of two alpha chains and two beta chains. In terms of tissue distribution, red blood cells.

In terms of biological role, involved in oxygen transport from the lung to the various peripheral tissues. The sequence is that of Hemoglobin subunit beta-C(NA) from Ammotragus lervia (Barbary sheep).